The chain runs to 389 residues: Succinate--CoA ligase [ADP-forming] subunit beta (389 aa).

The ATP-grasp domain maps to 9–244; that stretch reads KQLFAEYGLP…PSQEDEREAH (236 aa). ATP is bound by residues Lys46, 53–55, Glu99, Thr102, and Glu107; that span reads GRG. Mg(2+) is bound by residues Asn199 and Asp213. Substrate-binding positions include Asn264 and 321 to 323; that span reads GIV.

The protein belongs to the succinate/malate CoA ligase beta subunit family. In terms of assembly, heterotetramer of two alpha and two beta subunits. The cofactor is Mg(2+).

It carries out the reaction succinate + ATP + CoA = succinyl-CoA + ADP + phosphate. The enzyme catalyses GTP + succinate + CoA = succinyl-CoA + GDP + phosphate. Its pathway is carbohydrate metabolism; tricarboxylic acid cycle; succinate from succinyl-CoA (ligase route): step 1/1. Its function is as follows. Succinyl-CoA synthetase functions in the citric acid cycle (TCA), coupling the hydrolysis of succinyl-CoA to the synthesis of either ATP or GTP and thus represents the only step of substrate-level phosphorylation in the TCA. The beta subunit provides nucleotide specificity of the enzyme and binds the substrate succinate, while the binding sites for coenzyme A and phosphate are found in the alpha subunit. In Teredinibacter turnerae (strain ATCC 39867 / T7901), this protein is Succinate--CoA ligase [ADP-forming] subunit beta.